A 199-amino-acid polypeptide reads, in one-letter code: Fe/S biogenesis protein NfuA (199 aa).

[4Fe-4S] cluster-binding residues include cysteine 151 and cysteine 154.

This sequence belongs to the NfuA family. Homodimer. The cofactor is [4Fe-4S] cluster.

Functionally, involved in iron-sulfur cluster biogenesis. Binds a 4Fe-4S cluster, can transfer this cluster to apoproteins, and thereby intervenes in the maturation of Fe/S proteins. Could also act as a scaffold/chaperone for damaged Fe/S proteins. The protein is Fe/S biogenesis protein NfuA of Xanthomonas campestris pv. campestris (strain 8004).